We begin with the raw amino-acid sequence, 125 residues long: Fumarate reductase subunit D (125 aa).

The next 3 membrane-spanning stretches (helical) occupy residues 29–49, 64–84, and 102–122; these read VTAL…PLGW, NPIT…HAAH, and VIAL…GWML.

This sequence belongs to the FrdD family. As to quaternary structure, part of an enzyme complex containing four subunits: a flavoprotein (FrdA), an iron-sulfur protein (FrdB), and two hydrophobic anchor proteins (FrdC and FrdD).

The protein localises to the cell membrane. Its function is as follows. Anchors the catalytic components of the fumarate reductase complex to the cell membrane, binds quinones. The chain is Fumarate reductase subunit D from Mycobacterium bovis (strain BCG / Tokyo 172 / ATCC 35737 / TMC 1019).